The chain runs to 2595 residues: Glucosylceramide transporter ABCA12 (2595 aa).

Residues 23 to 43 (PLWTLVLILWPVIIFIILAIT) form a helical membrane-spanning segment. Residues asparagine 156, asparagine 174, asparagine 214, asparagine 275, asparagine 333, asparagine 367, asparagine 383, asparagine 412, asparagine 435, asparagine 528, asparagine 543, asparagine 577, asparagine 608, asparagine 623, asparagine 648, asparagine 752, asparagine 826, asparagine 920, and asparagine 963 are each glycosylated (N-linked (GlcNAc...) asparagine). 3 helical membrane passes run 1065-1085 (VSYS…AAFV), 1112-1132 (FAWL…LIII), and 1145-1165 (FILF…SYLI). Asparagine 1170 carries an N-linked (GlcNAc...) asparagine glycan. Transmembrane regions (helical) follow at residues 1174–1194 (IAAL…IVLV), 1200–1220 (LSYV…SYAS), and 1250–1270 (FGWL…IAWY). Residues 1346-1577 (VALHGVTKIY…FGDGYHLTLT (232 aa)) form the ABC transporter 1 domain. 1378–1385 (GPNGAGKT) contacts ATP. Asparagine 1524, asparagine 1663, and asparagine 1704 each carry an N-linked (GlcNAc...) asparagine glycan. Residues 1747 to 1767 (LIAQVILPIVFVTTAMGLGTL) traverse the membrane as a helical segment. N-linked (GlcNAc...) asparagine glycans are attached at residues asparagine 1769, asparagine 1819, asparagine 1835, asparagine 1876, asparagine 1921, and asparagine 1952. The next 4 helical transmembrane spans lie at 1979-1999 (ATIS…GYSV), 2035-2055 (FIYD…IIAI), 2072-2092 (LLLL…AGLF), and 2103-2123 (VCVN…VYFL). Residue asparagine 2178 is glycosylated (N-linked (GlcNAc...) asparagine). A helical membrane pass occupies residues 2187–2207 (GAMFVALVSQGTMFFSLRLLI). 2 N-linked (GlcNAc...) asparagine glycosylation sites follow: asparagine 2208 and asparagine 2223. An ABC transporter 2 domain is found at 2254 to 2489 (VQLYCLTKTY…FGRGFTVKVH (236 aa)). The helical transmembrane segment at 2270–2290 (IIAVNNISIGIPAGECFGLLG) threads the bilayer. 2290–2297 (GVNGAGKT) contacts ATP. Residues asparagine 2318, asparagine 2542, and asparagine 2547 are each glycosylated (N-linked (GlcNAc...) asparagine). The segment at 2571–2595 (SYETADTSSQGSTISVDSQDDQMES) is disordered. Residues 2574-2587 (TADTSSQGSTISVD) show a composition bias toward polar residues.

It belongs to the ABC transporter superfamily. ABCA family. In terms of assembly, interacts with NR1H2 and ABCA1; this interaction is required for ABCA1 localization to the cell surface and is necessary for its normal activity and stability. As to expression, mainly expressed in the stomach, placenta, testis and fetal brain. Expressed in the upper epidermal layers, mainly the granular layers, of skin. Expressed throughout the normal interfollicular epidermis with prominent expression in the stratum granulosum. Expressed in alpha and beta cells of pancreatic islets.

The protein resides in the cytoplasmic vesicle. Its subcellular location is the secretory vesicle membrane. The protein localises to the golgi apparatus membrane. The enzyme catalyses ATP + H2O + phospholipidSide 1 = ADP + phosphate + phospholipidSide 2.. The catalysed reaction is a beta-D-glucosylceramide(in) + ATP + H2O = a beta-D-glucosylceramide(out) + ADP + phosphate + H(+). In terms of biological role, transports lipids such as glucosylceramides from the outer to the inner leaflet of lamellar granules (LGs) membrane, whereby the lipids are finally transported to the keratinocyte periphery via the trans-Golgi network and LGs and released to the apical surface of the granular keratinocytes to form lipid lamellae in the stratum corneum of the epidermis, which is essential for skin barrier function. In the meantime, participates in the transport of the lamellar granules-associated proteolytic enzymes, in turn regulates desquamation and keratinocyte differentiation. Furthermore, is essential for the regulation of cellular cholesterol homeostasis by regulating ABCA1-dependent cholesterol efflux from macrophages through interaction with NR1H2 and ABCA1. Plays pleiotropic roles in regulating glucose stimulated insulin secretion from beta cells, regulating the morphology and fusion of insulin granules, lipid raft abundance and the actin cytoskeleton. Also involved in lung surfactant biogenesis. In Homo sapiens (Human), this protein is Glucosylceramide transporter ABCA12.